We begin with the raw amino-acid sequence, 64 residues long: Conotoxin Pu5.2 (64 aa).

A signal peptide spans 1–22; sequence MRCVPVFVILLLLIASTPSVDA. Positions 23–52 are excised as a propeptide; sequence RPNPKDDVPLASFHGADNANRILRTLWNLR. Position 63 is an isoleucine amide (I63).

Belongs to the conotoxin T superfamily. Post-translationally, contains 2 disulfide bonds that can be either 'C1-C3, C2-C4' or 'C1-C4, C2-C3', since these disulfide connectivities have been observed for conotoxins with cysteine framework V (for examples, see AC P0DQQ7 and AC P81755). As to expression, expressed by the venom duct.

It localises to the secreted. The protein is Conotoxin Pu5.2 of Conus pulicarius (Flea-bitten cone).